Consider the following 493-residue polypeptide: Phospholipid transfer protein (493 aa).

Residues 1 to 17 form the signal peptide; sequence MVLLWALFLALLAGAHA. N-linked (GlcNAc...) asparagine glycans are attached at residues asparagine 64, asparagine 91, asparagine 94, asparagine 117, and asparagine 143. A disulfide bridge connects residues cysteine 146 and cysteine 185. 2 N-linked (GlcNAc...) asparagine glycosylation sites follow: asparagine 245 and asparagine 398.

This sequence belongs to the BPI/LBP/Plunc superfamily. BPI/LBP family. Post-translationally, glycosylation is necessary for secretion and its phospholipid transfer activity. In terms of tissue distribution, highest level expression in the lung, brain and heart with relatively low levels in the liver, skeletal muscle and testis and very low levels found in the spleen and kidney.

The protein resides in the secreted. The protein localises to the nucleus. It catalyses the reaction a 1,2-diacyl-sn-glycero-3-phosphocholine(in) = a 1,2-diacyl-sn-glycero-3-phosphocholine(out). The enzyme catalyses a 1,2-diacyl-sn-glycero-3-phosphoethanolamine(in) = a 1,2-diacyl-sn-glycero-3-phosphoethanolamine(out). It carries out the reaction a 1,2-diacyl-sn-glycerol(in) = a 1,2-diacyl-sn-glycerol(out). The catalysed reaction is a 1,2-diacyl-sn-glycero-3-phosphate(in) = a 1,2-diacyl-sn-glycero-3-phosphate(out). It catalyses the reaction a sphingomyelin(in) = a sphingomyelin(out). The enzyme catalyses a 1,2-diacyl-sn-glycero-3-phospho-(1'-sn-glycerol)(in) = a 1,2-diacyl-sn-glycero-3-phospho-(1'-sn-glycerol)(out). It carries out the reaction a 1,2-diacyl-sn-glycero-3-phospho-(1D-myo-inositol)(in) = a 1,2-diacyl-sn-glycero-3-phospho-(1D-myo-inositol)(out). The catalysed reaction is 1-hexadecanoyl-2-(5Z,8Z,11Z,14Z-eicosatetraenoyl)-sn-glycero-3-phosphoethanolamine(in) = 1-hexadecanoyl-2-(5Z,8Z,11Z,14Z-eicosatetraenoyl)-sn-glycero-3-phosphoethanolamine(out). It catalyses the reaction N-(hexadecanoyl)-sphing-4-enine-1-phosphocholine(in) = N-(hexadecanoyl)-sphing-4-enine-1-phosphocholine(out). The enzyme catalyses 1,2-dihexadecanoyl-sn-glycero-3-phosphocholine(in) = 1,2-dihexadecanoyl-sn-glycero-3-phosphocholine(out). In terms of biological role, mediates the transfer of phospholipids and free cholesterol from triglyceride-rich lipoproteins (low density lipoproteins or LDL and very low density lipoproteins or VLDL) into high-density lipoproteins (HDL) as well as the exchange of phospholipids between triglyceride-rich lipoproteins themselves. Facilitates the transfer of a spectrum of different lipid molecules, including sphingomyelin, phosphatidylcholine, phosphatidylinositol, phosphatidylglycerol, and phosphatidyl ethanolamine. Plays an important role in HDL remodeling which involves modulating the size and composition of HDL. Also plays a key role in the uptake of cholesterol from peripheral cells and tissues that is subsequently transported to the liver for degradation and excretion. Two distinct forms of PLTP exist in plasma: an active form that can transfer phosphatidylcholine from phospholipid vesicles to HDL, and an inactive form that lacks this capability. This chain is Phospholipid transfer protein (Pltp), found in Mus musculus (Mouse).